The sequence spans 147 residues: uncharacterized protein (147 aa).

Residues 63–79 traverse the membrane as a helical segment; it reads LFIVACSAVFATIAYIN.

Belongs to the FUN14 family.

It localises to the membrane. This is an uncharacterized protein from Schizosaccharomyces pombe (strain 972 / ATCC 24843) (Fission yeast).